The sequence spans 315 residues: Putative olfactory receptor 2I1 (315 aa).

At 1-24 (MKANYSAEERFLLLGFSDWPSLQP) the chain is on the extracellular side. The chain crosses the membrane as a helical span at residues 25–48 (VLFALVLLCYLLTLTGNSALVLLA). Topologically, residues 49–56 (VRDPRLHT) are cytoplasmic. A helical membrane pass occupies residues 57–78 (PMYYFLCHLALVDAGFTTSVVP). Residues 79–99 (PLLANLRGPALWLPRSHCTAQ) lie on the Extracellular side of the membrane. Residues cysteine 96 and cysteine 188 are joined by a disulfide bond. Residues 100–119 (LCASLALGSAECVLLAVMAL) form a helical membrane-spanning segment. The Cytoplasmic segment spans residues 120 to 138 (DRAAAVCRPLRYAGLVSPR). A helical transmembrane segment spans residues 139 to 157 (LCRTLASASWLSGLTNSVA). Topologically, residues 158-195 (QTALLAERPLCAPRLLDHFICELPALLKLACGGDGDTT) are extracellular. A helical transmembrane segment spans residues 196 to 219 (ENQMFAARVVILLLPFAVILASYG). Topologically, residues 220–236 (AVARAVCCMRFSGGRRR) are cytoplasmic. The helical transmembrane segment at 237–259 (AVGTCGSHLTAVCLFYGSAIYTY) threads the bilayer. Residues 260–272 (LQPAQRYNQARGK) lie on the Extracellular side of the membrane. Residues 273-292 (FVSLFYTVVTPALNPLIYTL) form a helical membrane-spanning segment. At 293–315 (RNKKVKGAARRLLRSLGRGQAGQ) the chain is on the cytoplasmic side.

The protein belongs to the G-protein coupled receptor 1 family.

It is found in the cell membrane. In terms of biological role, odorant receptor. This chain is Putative olfactory receptor 2I1, found in Homo sapiens (Human).